A 42-amino-acid polypeptide reads, in one-letter code: uncharacterized protein (42 aa).

Residues 5–27 traverse the membrane as a helical segment; that stretch reads FLHTNITIIPHSVLYVSLSYYII.

It localises to the membrane. This is an uncharacterized protein from Saccharomyces cerevisiae (strain ATCC 204508 / S288c) (Baker's yeast).